We begin with the raw amino-acid sequence, 591 residues long: ESX-1 secretion system protein EccCb1 (591 aa).

FtsK domains lie at 65-259 (LQDV…NETQ) and 359-545 (LTPA…EKQE). ATP contacts are provided by residues 84 to 91 (GAPQTGKS) and 376 to 383 (GAAKSGKT).

As to quaternary structure, part of the ESX-1 / type VII secretion system (T7SS), which is composed of cytosolic and membrane components. The ESX-1 membrane complex is composed of EccB1, EccCa1, EccCb1, EccD1 and EccE1. Interacts with EccCa1, EspK and the C-terminus of EsxB. Residues 1-261 interact with EsxB and an artificial EsxB-EsxA heterodimer.

It localises to the cytoplasm. With respect to regulation, esxB binding to the second FtsK domain of EccCb1 causes multimerization; a subsequent unknown step relieves the allosteric inhibition of linker 2 on FtsK domain 1 (in EccCa1 subunit), activating the ATPase activity. Functionally, part of the ESX-1 specialized secretion system, which delivers several virulence factors to host cells during infection, including the key virulence factors EsxA (ESAT-6) and EsxB (CFP-10). EccCb1 may link the cytosolic components of the system with the membrane components. The polypeptide is ESX-1 secretion system protein EccCb1 (Mycobacterium tuberculosis (strain ATCC 25618 / H37Rv)).